The chain runs to 483 residues: Protein nucleotidyltransferase YdiU (483 aa).

Residues Gly-87, Gly-89, Arg-90, Lys-110, Asp-122, Gly-123, Arg-173, and Arg-180 each contribute to the ATP site. Asp-249 functions as the Proton acceptor in the catalytic mechanism. Positions 250 and 259 each coordinate Mg(2+). Asp-259 contributes to the ATP binding site.

This sequence belongs to the SELO family. The cofactor is Mg(2+). It depends on Mn(2+) as a cofactor.

The catalysed reaction is L-seryl-[protein] + ATP = 3-O-(5'-adenylyl)-L-seryl-[protein] + diphosphate. It carries out the reaction L-threonyl-[protein] + ATP = 3-O-(5'-adenylyl)-L-threonyl-[protein] + diphosphate. It catalyses the reaction L-tyrosyl-[protein] + ATP = O-(5'-adenylyl)-L-tyrosyl-[protein] + diphosphate. The enzyme catalyses L-histidyl-[protein] + UTP = N(tele)-(5'-uridylyl)-L-histidyl-[protein] + diphosphate. The catalysed reaction is L-seryl-[protein] + UTP = O-(5'-uridylyl)-L-seryl-[protein] + diphosphate. It carries out the reaction L-tyrosyl-[protein] + UTP = O-(5'-uridylyl)-L-tyrosyl-[protein] + diphosphate. Nucleotidyltransferase involved in the post-translational modification of proteins. It can catalyze the addition of adenosine monophosphate (AMP) or uridine monophosphate (UMP) to a protein, resulting in modifications known as AMPylation and UMPylation. In Pectobacterium atrosepticum (strain SCRI 1043 / ATCC BAA-672) (Erwinia carotovora subsp. atroseptica), this protein is Protein nucleotidyltransferase YdiU.